A 396-amino-acid chain; its full sequence is NADH-quinone oxidoreductase subunit D 1 (396 aa).

The protein belongs to the complex I 49 kDa subunit family. As to quaternary structure, NDH-1 is composed of 14 different subunits. Subunits NuoB, C, D, E, F, and G constitute the peripheral sector of the complex.

The protein localises to the cell inner membrane. It carries out the reaction a quinone + NADH + 5 H(+)(in) = a quinol + NAD(+) + 4 H(+)(out). Functionally, NDH-1 shuttles electrons from NADH, via FMN and iron-sulfur (Fe-S) centers, to quinones in the respiratory chain. The immediate electron acceptor for the enzyme in this species is believed to be ubiquinone. Couples the redox reaction to proton translocation (for every two electrons transferred, four hydrogen ions are translocated across the cytoplasmic membrane), and thus conserves the redox energy in a proton gradient. This is NADH-quinone oxidoreductase subunit D 1 from Rhizobium meliloti (strain 1021) (Ensifer meliloti).